Reading from the N-terminus, the 612-residue chain is Alpha-glycerophosphate oxidase (612 aa).

Asp21–Glu49 is a binding site for FAD. Residues Val398–Asp408 are compositionally biased toward basic and acidic residues. Residues Val398–Phe418 form a disordered region.

This sequence belongs to the FAD-dependent glycerol-3-phosphate dehydrogenase family. The cofactor is FAD.

The protein resides in the cytoplasm. The catalysed reaction is sn-glycerol 3-phosphate + O2 = dihydroxyacetone phosphate + H2O2. The polypeptide is Alpha-glycerophosphate oxidase (glpO) (Streptococcus pyogenes serotype M3 (strain ATCC BAA-595 / MGAS315)).